The primary structure comprises 341 residues: Phosphate acyltransferase (341 aa).

It belongs to the PlsX family. In terms of assembly, homodimer. Probably interacts with PlsY.

It localises to the cytoplasm. It carries out the reaction a fatty acyl-[ACP] + phosphate = an acyl phosphate + holo-[ACP]. It participates in lipid metabolism; phospholipid metabolism. Its function is as follows. Catalyzes the reversible formation of acyl-phosphate (acyl-PO(4)) from acyl-[acyl-carrier-protein] (acyl-ACP). This enzyme utilizes acyl-ACP as fatty acyl donor, but not acyl-CoA. This Vibrio parahaemolyticus serotype O3:K6 (strain RIMD 2210633) protein is Phosphate acyltransferase.